The following is a 492-amino-acid chain: Anthranilate synthase component 1 (492 aa).

Residues serine 48 and proline 273–methionine 275 each bind L-tryptophan. Glycine 308–threonine 309 contacts chorismate. Glutamate 335 contributes to the Mg(2+) binding site. Chorismate is bound by residues tyrosine 423, arginine 443, glycine 457–glycine 459, and glycine 459. Glutamate 472 is a Mg(2+) binding site.

The protein belongs to the anthranilate synthase component I family. In terms of assembly, heterotetramer consisting of two non-identical subunits: a beta subunit (TrpG) and a large alpha subunit (TrpE). It depends on Mg(2+) as a cofactor.

It carries out the reaction chorismate + L-glutamine = anthranilate + pyruvate + L-glutamate + H(+). It functions in the pathway amino-acid biosynthesis; L-tryptophan biosynthesis; L-tryptophan from chorismate: step 1/5. With respect to regulation, feedback inhibited by tryptophan. Part of a heterotetrameric complex that catalyzes the two-step biosynthesis of anthranilate, an intermediate in the biosynthesis of L-tryptophan. In the first step, the glutamine-binding beta subunit (TrpG) of anthranilate synthase (AS) provides the glutamine amidotransferase activity which generates ammonia as a substrate that, along with chorismate, is used in the second step, catalyzed by the large alpha subunit of AS (TrpE) to produce anthranilate. In the absence of TrpG, TrpE can synthesize anthranilate directly from chorismate and high concentrations of ammonia. The polypeptide is Anthranilate synthase component 1 (Pseudomonas aeruginosa (strain ATCC 15692 / DSM 22644 / CIP 104116 / JCM 14847 / LMG 12228 / 1C / PRS 101 / PAO1)).